The primary structure comprises 292 residues: Pyridoxal 5'-phosphate synthase subunit PdxS (292 aa).

Position 22 (aspartate 22) interacts with D-ribose 5-phosphate. The Schiff-base intermediate with D-ribose 5-phosphate role is filled by lysine 79. Glycine 151 contributes to the D-ribose 5-phosphate binding site. Arginine 163 contributes to the D-glyceraldehyde 3-phosphate binding site. Residues glycine 212 and 233–234 (GS) each bind D-ribose 5-phosphate.

The protein belongs to the PdxS/SNZ family. As to quaternary structure, in the presence of PdxT, forms a dodecamer of heterodimers.

It carries out the reaction aldehydo-D-ribose 5-phosphate + D-glyceraldehyde 3-phosphate + L-glutamine = pyridoxal 5'-phosphate + L-glutamate + phosphate + 3 H2O + H(+). It participates in cofactor biosynthesis; pyridoxal 5'-phosphate biosynthesis. Its function is as follows. Catalyzes the formation of pyridoxal 5'-phosphate from ribose 5-phosphate (RBP), glyceraldehyde 3-phosphate (G3P) and ammonia. The ammonia is provided by the PdxT subunit. Can also use ribulose 5-phosphate and dihydroxyacetone phosphate as substrates, resulting from enzyme-catalyzed isomerization of RBP and G3P, respectively. The sequence is that of Pyridoxal 5'-phosphate synthase subunit PdxS from Caldanaerobacter subterraneus subsp. tengcongensis (strain DSM 15242 / JCM 11007 / NBRC 100824 / MB4) (Thermoanaerobacter tengcongensis).